The sequence spans 78 residues: Small ribosomal subunit protein bS18 (78 aa).

It belongs to the bacterial ribosomal protein bS18 family. As to quaternary structure, part of the 30S ribosomal subunit. Forms a tight heterodimer with protein bS6.

Its function is as follows. Binds as a heterodimer with protein bS6 to the central domain of the 16S rRNA, where it helps stabilize the platform of the 30S subunit. The sequence is that of Small ribosomal subunit protein bS18 from Beutenbergia cavernae (strain ATCC BAA-8 / DSM 12333 / CCUG 43141 / JCM 11478 / NBRC 16432 / NCIMB 13614 / HKI 0122).